The sequence spans 87 residues: Protein Tat (87 aa).

The interval 1–21 is disordered; the sequence is MDPVDPNLEPWNHPGSQPRTP. Residues 1–24 form an interaction with human CREBBP region; the sequence is MDPVDPNLEPWNHPGSQPRTPCNK. Positions 1-48 are transactivation; sequence MDPVDPNLEPWNHPGSQPRTPCNKCYCKKCCYHCQMCFITKGLGISYG. Residues C22, C25, and C27 each contribute to the Zn(2+) site. Positions 22–37 are cysteine-rich; that stretch reads CNKCYCKKCCYHCQMC. N6-acetyllysine; by host PCAF is present on K28. The Zn(2+) site is built by C30, H33, C34, and C37. Residues 38–48 are core; the sequence is FITKGLGISYG. The tract at residues 45-87 is disordered; sequence ISYGRKKRRQRRRPPQGNQAHQDPLPEQPSSQHRGDHPTGPKE. The segment covering 48–58 has biased composition (basic residues); sequence GRKKRRQRRRP. Positions 49 to 57 match the Nuclear localization signal, RNA-binding (TAR), and protein transduction motif; that stretch reads RKKRRQRRR. The tract at residues 49–87 is interaction with the host capping enzyme RNGTT; the sequence is RKKRRQRRRPPQGNQAHQDPLPEQPSSQHRGDHPTGPKE. N6-acetyllysine; by host EP300 and GCN5L2 occurs at positions 50 and 51. Residues R52 and R53 each carry the asymmetric dimethylarginine; by host PRMT6 modification. Over residues 77–87 the composition is skewed to basic and acidic residues; the sequence is HRGDHPTGPKE. The short motif at 78-80 is the Cell attachment site element; sequence RGD.

This sequence belongs to the lentiviruses Tat family. In terms of assembly, interacts with host CCNT1. Associates with the P-TEFb complex composed at least of Tat, P-TEFb (CDK9 and CCNT1), TAR RNA, RNA Pol II. Recruits the HATs CREBBP, TAF1/TFIID, EP300, PCAF and GCN5L2. Interacts with host KAT5/Tip60; this interaction targets the latter to degradation. Interacts with the host deacetylase SIRT1. Interacts with host capping enzyme RNGTT; this interaction stimulates RNGTT. Binds to host KDR, and to the host integrins ITGAV/ITGB3 and ITGA5/ITGB1. Interacts with host KPNB1/importin beta-1 without previous binding to KPNA1/importin alpha-1. Interacts with EIF2AK2. Interacts with host nucleosome assembly protein NAP1L1; this interaction may be required for the transport of Tat within the nucleus, since the two proteins interact at the nuclear rim. Interacts with host C1QBP/SF2P32; this interaction involves lysine-acetylated Tat. Interacts with the host chemokine receptors CCR2, CCR3 and CXCR4. Interacts with host DPP4/CD26; this interaction may trigger an anti-proliferative effect. Interacts with host LDLR. Interacts with the host extracellular matrix metalloproteinase MMP1. Interacts with host PRMT6; this interaction mediates Tat's methylation. Interacts with, and is ubiquitinated by MDM2/Hdm2. Interacts with host PSMC3 and HTATIP2. Interacts with STAB1; this interaction may overcome SATB1-mediated repression of IL2 and IL2RA (interleukin) in T cells by binding to the same domain than HDAC1. Interacts (when acetylated) with human CDK13, thereby increasing HIV-1 mRNA splicing and promoting the production of the doubly spliced HIV-1 protein Nef. Interacts with host TBP; this interaction modulates the activity of transcriptional pre-initiation complex. Interacts with host RELA. Interacts with host PLSCR1; this interaction negatively regulates Tat transactivation activity by altering its subcellular distribution. In terms of processing, asymmetrical arginine methylation by host PRMT6 seems to diminish the transactivation capacity of Tat and affects the interaction with host CCNT1. Acetylation by EP300, CREBBP, GCN5L2/GCN5 and PCAF regulates the transactivation activity of Tat. EP300-mediated acetylation of Lys-50 promotes dissociation of Tat from the TAR RNA through the competitive binding to PCAF's bromodomain. In addition, the non-acetylated Tat's N-terminus can also interact with PCAF. PCAF-mediated acetylation of Lys-28 enhances Tat's binding to CCNT1. Lys-50 is deacetylated by SIRT1. Post-translationally, polyubiquitination by host MDM2 does not target Tat to degradation, but activates its transactivation function and fosters interaction with CCNT1 and TAR RNA. In terms of processing, phosphorylated by EIF2AK2 on serine and threonine residues adjacent to the basic region important for TAR RNA binding and function. Phosphorylation of Tat by EIF2AK2 is dependent on the prior activation of EIF2AK2 by dsRNA.

Its subcellular location is the host nucleus. It is found in the host nucleolus. The protein resides in the host cytoplasm. The protein localises to the secreted. Transcriptional activator that increases RNA Pol II processivity, thereby increasing the level of full-length viral transcripts. Recognizes a hairpin structure at the 5'-LTR of the nascent viral mRNAs referred to as the transactivation responsive RNA element (TAR) and recruits the cyclin T1-CDK9 complex (P-TEFb complex) that will in turn hyperphosphorylate the RNA polymerase II to allow efficient elongation. The CDK9 component of P-TEFb and other Tat-activated kinases hyperphosphorylate the C-terminus of RNA Pol II that becomes stabilized and much more processive. Other factors such as HTATSF1/Tat-SF1, SUPT5H/SPT5, and HTATIP2 are also important for Tat's function. Besides its effect on RNA Pol II processivity, Tat induces chromatin remodeling of proviral genes by recruiting the histone acetyltransferases (HATs) CREBBP, EP300 and PCAF to the chromatin. This also contributes to the increase in proviral transcription rate, especially when the provirus integrates in transcriptionally silent region of the host genome. To ensure maximal activation of the LTR, Tat mediates nuclear translocation of NF-kappa-B by interacting with host RELA. Through its interaction with host TBP, Tat may also modulate transcription initiation. Tat can reactivate a latently infected cell by penetrating in it and transactivating its LTR promoter. In the cytoplasm, Tat is thought to act as a translational activator of HIV-1 mRNAs. Its function is as follows. Extracellular circulating Tat can be endocytosed by surrounding uninfected cells via the binding to several surface receptors such as CD26, CXCR4, heparan sulfate proteoglycans (HSPG) or LDLR. Neurons are rarely infected, but they internalize Tat via their LDLR. Through its interaction with nuclear HATs, Tat is potentially able to control the acetylation-dependent cellular gene expression. Modulates the expression of many cellular genes involved in cell survival, proliferation or in coding for cytokines or cytokine receptors. Tat plays a role in T-cell and neurons apoptosis. Tat induced neurotoxicity and apoptosis probably contribute to neuroAIDS. Circulating Tat also acts as a chemokine-like and/or growth factor-like molecule that binds to specific receptors on the surface of the cells, affecting many cellular pathways. In the vascular system, Tat binds to ITGAV/ITGB3 and ITGA5/ITGB1 integrins dimers at the surface of endothelial cells and competes with bFGF for heparin-binding sites, leading to an excess of soluble bFGF. The polypeptide is Protein Tat (Homo sapiens (Human)).